Reading from the N-terminus, the 269-residue chain is Formamidopyrimidine-DNA glycosylase (269 aa).

P2 acts as the Schiff-base intermediate with DNA in catalysis. Residue E3 is the Proton donor of the active site. K57 functions as the Proton donor; for beta-elimination activity in the catalytic mechanism. DNA-binding residues include H90, R109, and K150. The segment at 235–269 (QVYGRKGEPCRVCGTPIAATKHAQRATFYCRHCQK) adopts an FPG-type zinc-finger fold. Residue R259 is the Proton donor; for delta-elimination activity of the active site.

The protein belongs to the FPG family. As to quaternary structure, monomer. Zn(2+) is required as a cofactor.

It catalyses the reaction Hydrolysis of DNA containing ring-opened 7-methylguanine residues, releasing 2,6-diamino-4-hydroxy-5-(N-methyl)formamidopyrimidine.. It carries out the reaction 2'-deoxyribonucleotide-(2'-deoxyribose 5'-phosphate)-2'-deoxyribonucleotide-DNA = a 3'-end 2'-deoxyribonucleotide-(2,3-dehydro-2,3-deoxyribose 5'-phosphate)-DNA + a 5'-end 5'-phospho-2'-deoxyribonucleoside-DNA + H(+). Functionally, involved in base excision repair of DNA damaged by oxidation or by mutagenic agents. Acts as a DNA glycosylase that recognizes and removes damaged bases. Has a preference for oxidized purines, such as 7,8-dihydro-8-oxoguanine (8-oxoG). Has AP (apurinic/apyrimidinic) lyase activity and introduces nicks in the DNA strand. Cleaves the DNA backbone by beta-delta elimination to generate a single-strand break at the site of the removed base with both 3'- and 5'-phosphates. The chain is Formamidopyrimidine-DNA glycosylase from Salmonella paratyphi B (strain ATCC BAA-1250 / SPB7).